Consider the following 342-residue polypeptide: Transmembrane protein 115 homolog (342 aa).

Topologically, residues 1 to 21 (MQYSSRFLELNIPDSFLNINK) are cytoplasmic. A helical transmembrane segment spans residues 22-42 (IPDATKFITVTYICLTATLFC). Topologically, residues 43–121 (IRRSLYNKLV…NWNSSKEMFK (79 aa)) are lumenal. Asparagine 114 is a glycosylation site (N-linked (GlcNAc...) asparagine). A helical transmembrane segment spans residues 122–142 (FIIVLGSLTNVLIIMLTLLVS). The Cytoplasmic segment spans residues 143–159 (FFSNKVRLDIPLDGNYT). A helical transmembrane segment spans residues 160-180 (ILIGFPIIYRQLLPETTIIHL). Residues 181-207 (KTPQFLAKNFRFKLLPIFVMFTMTVTQ) are Lumenal-facing. Residues 208 to 228 (IIWFHHFAQLFSIWVTFFASW) traverse the membrane as a helical segment. Residues 229–342 (SYLRFFQKLA…QVLEERMVNP (114 aa)) lie on the Cytoplasmic side of the membrane.

The protein belongs to the TMEM115 family. In terms of assembly, homooligomer.

Its subcellular location is the golgi apparatus membrane. Its function is as follows. May play a role in retrograde transport of proteins from the Golgi to the endoplasmic reticulum. This is Transmembrane protein 115 homolog from Saccharomyces cerevisiae (strain ATCC 204508 / S288c) (Baker's yeast).